The primary structure comprises 233 residues: Cytidylate kinase (233 aa).

15–23 (GPSGAGKSS) serves as a coordination point for ATP.

It belongs to the cytidylate kinase family. Type 1 subfamily.

It is found in the cytoplasm. The catalysed reaction is CMP + ATP = CDP + ADP. It catalyses the reaction dCMP + ATP = dCDP + ADP. This Citrifermentans bemidjiense (strain ATCC BAA-1014 / DSM 16622 / JCM 12645 / Bem) (Geobacter bemidjiensis) protein is Cytidylate kinase.